Reading from the N-terminus, the 332-residue chain is Geranylgeranyl pyrophosphate synthase dpasD (332 aa).

The isopentenyl diphosphate site is built by Lys-55, Arg-58, and His-87. Positions 94 and 98 each coordinate Mg(2+). Arg-103 lines the dimethylallyl diphosphate pocket. Position 104 (Arg-104) interacts with isopentenyl diphosphate. Lys-181, Thr-182, and Gln-215 together coordinate dimethylallyl diphosphate. Asp-218 is a Mg(2+) binding site. Dimethylallyl diphosphate-binding residues include Asn-222, Lys-232, and Lys-242.

This sequence belongs to the FPP/GGPP synthase family. Mg(2+) serves as cofactor.

The catalysed reaction is isopentenyl diphosphate + dimethylallyl diphosphate = (2E)-geranyl diphosphate + diphosphate. The enzyme catalyses isopentenyl diphosphate + (2E)-geranyl diphosphate = (2E,6E)-farnesyl diphosphate + diphosphate. It carries out the reaction isopentenyl diphosphate + (2E,6E)-farnesyl diphosphate = (2E,6E,10E)-geranylgeranyl diphosphate + diphosphate. It participates in secondary metabolite biosynthesis; terpenoid biosynthesis. Functionally, geranylgeranyl pyrophosphate synthase; part of the gene cluster that mediates the biosynthesis of the diterpenoid pyrones subglutinols A and B. The first step of the pathway is the synthesis of the alpha-pyrone moiety by the polyketide synthase dpasA via condensation of one acetyl-CoA starter unit with 3 malonyl-CoA units and 2 methylations. The alpha-pyrone is then combined with geranylgeranyl pyrophosphate (GGPP) formed by the GGPP synthase dpasD through the action of the prenyltransferase dpasC to yield a linear alpha-pyrone diterpenoid. Subsequent steps in the diterpenoid pyrone biosynthetic pathway involve the decalin core formation, which is initiated by the epoxidation of the C10-C11 olefin by the FAD-dependent oxidoreductase dpasE, and is followed by a cyclization cascade catalyzed by the terpene cyclase dpasB. The FAD-linked oxidoreductase dpasF is then involved in tetrahydrofuran (THF) ring formation at the C5 unit to complete the formation of subglutinols A and B. DpasF also possesses an additional catalytic ability of multi-step oxidations to generate a new DDP analog with an enone system at the C5 named FDDP A. This is Geranylgeranyl pyrophosphate synthase dpasD from Apiospora sacchari (Arthrinium sacchari).